A 153-amino-acid polypeptide reads, in one-letter code: UPF0225 protein ETA_15740 (153 aa).

It belongs to the UPF0225 family.

This chain is UPF0225 protein ETA_15740, found in Erwinia tasmaniensis (strain DSM 17950 / CFBP 7177 / CIP 109463 / NCPPB 4357 / Et1/99).